Consider the following 238-residue polypeptide: Ribonuclease PH (238 aa).

Phosphate contacts are provided by residues arginine 86 and 124-126 (GTR).

Belongs to the RNase PH family. As to quaternary structure, homohexameric ring arranged as a trimer of dimers.

It catalyses the reaction tRNA(n+1) + phosphate = tRNA(n) + a ribonucleoside 5'-diphosphate. Phosphorolytic 3'-5' exoribonuclease that plays an important role in tRNA 3'-end maturation. Removes nucleotide residues following the 3'-CCA terminus of tRNAs; can also add nucleotides to the ends of RNA molecules by using nucleoside diphosphates as substrates, but this may not be physiologically important. Probably plays a role in initiation of 16S rRNA degradation (leading to ribosome degradation) during starvation. The polypeptide is Ribonuclease PH (Geobacter sulfurreducens (strain ATCC 51573 / DSM 12127 / PCA)).